An 82-amino-acid chain; its full sequence is Mu-conotoxin MrVIB (82 aa).

The signal sequence occupies residues 1-22; sequence MKLTCMMIVAVLFLTAWTLVMA. The propeptide occupies 23 to 49; it reads DDSNNGLANHFLKSRDEMEDPEASKLE. 3 disulfide bridges follow: cysteine 53/cysteine 71, cysteine 60/cysteine 76, and cysteine 70/cysteine 81.

This sequence belongs to the conotoxin O1 superfamily. As to expression, expressed by the venom duct.

The protein resides in the secreted. Its function is as follows. MuO-conotoxins are gating-modifier toxins that inhibit sodium current by trapping the domain II voltage sensor in the closed position to prevent opening of the sodium channel. This toxin has a preference for Nav1.4/SCN4A over Nav1.2/SCN2A sodium channels. It blocks Nav channels by interacting mainly with the C-terminal part of the pore loop of domain-3. It also blocks fast-inactivating calcium current. Blocks Nav1.8/SCN10A sodium channels and has potent and long-lasting local anesthetic effects. It can also block propagation of action potentials in A- and C-fibers in sciatic nerve as well as skeletal muscle in isolated preparations. The polypeptide is Mu-conotoxin MrVIB (Conus marmoreus (Marble cone)).